Reading from the N-terminus, the 266-residue chain is Type 1 encapsulin shell protein (266 aa).

Belongs to the encapsulin family. Family 1 subfamily. In terms of assembly, this encapsulin nanocompartment is formed by 60 subunits; monomers form 12 pentamers which assemble to form shells. Shells are loaded with 4 encapsulated ferritin-like protein decamers (EncFtn) in a tetrahedral arrangement. A 3 nm gap is consistently seen between the shell and the cargo.

The protein resides in the encapsulin nanocompartment. In terms of biological role, shell component of a type 1 encapsulin nanocompartment. Assembles into proteinaceous shells about 21 nm in diameter. Small pores form at, or close to, the 2-, 3-, and 5-fold symmetry axes. Data analysis suggests the 5-fold pores open and close with maximal and minimal aperatures of 15 and 5 Angstroms. Cargo protein Fer (ferritin-like protein, probably stores iron) is targeted to the interior via its C-terminal extension; empty intact shells can be isolated in the absence of cargo protein. The polypeptide is Type 1 encapsulin shell protein (Haliangium ochraceum (strain DSM 14365 / JCM 11303 / SMP-2)).